Consider the following 141-residue polypeptide: Nuclear transcription factor Y subunit B-1 (141 aa).

A disordered region spans residues 1 to 23 (MADTPSSPAGDGGESGGSVREQD). Alanine 2 is subject to N-acetylalanine. The DNA-binding element occupies 26–32 (LPIANIS). The subunit association domain (SAD) stretch occupies residues 53-64 (VQECVSEFISFI). The interval 114 to 141 (DNKGSGKSGDGSNRDAGGGVSGEEMPSW) is disordered.

It belongs to the NFYB/HAP3 subunit family. In terms of assembly, heterotrimeric transcription factor composed of three components, NF-YA, NF-YB and NF-YC. NF-YB and NF-YC must interact and dimerize for NF-YA association and DNA binding. Binds directly with DPB3-1. Ubiquitous. Predominantly expressed in leaves, flowers and siliques.

The protein resides in the nucleus. Component of the NF-Y/HAP transcription factor complex. The NF-Y complex stimulates the transcription of various genes by recognizing and binding to a CCAAT motif in promoters. The sequence is that of Nuclear transcription factor Y subunit B-1 from Arabidopsis thaliana (Mouse-ear cress).